Consider the following 266-residue polypeptide: Type III pantothenate kinase (266 aa).

11–18 lines the ATP pocket; sequence DIGNTSTV. Residue 111 to 114 coordinates substrate; sequence GADR. Asp-113 (proton acceptor) is an active-site residue. A K(+)-binding site is contributed by Asp-135. Residue Thr-138 coordinates ATP. Thr-190 contributes to the substrate binding site.

This sequence belongs to the type III pantothenate kinase family. In terms of assembly, homodimer. It depends on NH4(+) as a cofactor. K(+) is required as a cofactor.

It localises to the cytoplasm. The enzyme catalyses (R)-pantothenate + ATP = (R)-4'-phosphopantothenate + ADP + H(+). Its pathway is cofactor biosynthesis; coenzyme A biosynthesis; CoA from (R)-pantothenate: step 1/5. Functionally, catalyzes the phosphorylation of pantothenate (Pan), the first step in CoA biosynthesis. This is Type III pantothenate kinase from Deinococcus geothermalis (strain DSM 11300 / CIP 105573 / AG-3a).